Consider the following 113-residue polypeptide: uncharacterized protein (113 aa).

Positions methionine 1–serine 22 are cleaved as a signal peptide. Residue asparagine 47 is glycosylated (N-linked (GlcNAc...) asparagine).

The protein localises to the secreted. This is an uncharacterized protein from Caenorhabditis elegans.